A 40-amino-acid chain; its full sequence is Trypsin inhibitor (40 aa).

Monomer.

It catalyses the reaction Preferential cleavage: Arg-|-Xaa, Lys-|-Xaa.. Its function is as follows. Inhibits trypsin but not chymotrypsin, papain or porcine pancreatic alpha-amylase. Has insecticidal activity against A.aegypti. Functions by inhibiting the A.aegypti midgut proteases to reduce the survival of larva and adults. The polypeptide is Trypsin inhibitor (Cassia leiandra (Marimari)).